A 1072-amino-acid chain; its full sequence is Carbamoyl phosphate synthase large chain (1072 aa).

A carboxyphosphate synthetic domain region spans residues 1 to 401 (MPKYKDISKV…SLLKAVRSLE (401 aa)). ATP-binding residues include R129, R169, G175, G176, K208, L210, E215, G241, V242, H243, Q284, and E298. One can recognise an ATP-grasp 1 domain in the interval 133–327 (KRKMQEIGEP…IAKIAAKIAI (195 aa)). Mg(2+)-binding residues include Q284, E298, and N300. 3 residues coordinate Mn(2+): Q284, E298, and N300. Residues 402 to 544 (IKAYGLRLDS…YIYSTYCEED (143 aa)) are oligomerization domain. The tract at residues 545 to 929 (EVETHDIPKV…ALYKALEGAG (385 aa)) is carbamoyl phosphate synthetic domain. Positions 671-861 (SKLLKELNIN…MVKLAVEVAL (191 aa)) constitute an ATP-grasp 2 domain. Residues R707, K746, I748, E752, G777, V778, H779, S780, Q820, and E832 each contribute to the ATP site. Mg(2+)-binding residues include Q820, E832, and N834. Mn(2+) contacts are provided by Q820, E832, and N834. In terms of domain architecture, MGS-like spans 930–1072 (LKIPKKGKIL…QKDNVKNLVL (143 aa)). An allosteric domain region spans residues 930–1072 (LKIPKKGKIL…QKDNVKNLVL (143 aa)).

Belongs to the CarB family. Composed of two chains; the small (or glutamine) chain promotes the hydrolysis of glutamine to ammonia, which is used by the large (or ammonia) chain to synthesize carbamoyl phosphate. Tetramer of heterodimers (alpha,beta)4. Mg(2+) is required as a cofactor. Mn(2+) serves as cofactor.

The enzyme catalyses hydrogencarbonate + L-glutamine + 2 ATP + H2O = carbamoyl phosphate + L-glutamate + 2 ADP + phosphate + 2 H(+). It carries out the reaction hydrogencarbonate + NH4(+) + 2 ATP = carbamoyl phosphate + 2 ADP + phosphate + 2 H(+). It functions in the pathway amino-acid biosynthesis; L-arginine biosynthesis; carbamoyl phosphate from bicarbonate: step 1/1. It participates in pyrimidine metabolism; UMP biosynthesis via de novo pathway; (S)-dihydroorotate from bicarbonate: step 1/3. Large subunit of the glutamine-dependent carbamoyl phosphate synthetase (CPSase). CPSase catalyzes the formation of carbamoyl phosphate from the ammonia moiety of glutamine, carbonate, and phosphate donated by ATP, constituting the first step of 2 biosynthetic pathways, one leading to arginine and/or urea and the other to pyrimidine nucleotides. The large subunit (synthetase) binds the substrates ammonia (free or transferred from glutamine from the small subunit), hydrogencarbonate and ATP and carries out an ATP-coupled ligase reaction, activating hydrogencarbonate by forming carboxy phosphate which reacts with ammonia to form carbamoyl phosphate. This chain is Carbamoyl phosphate synthase large chain, found in Caldanaerobacter subterraneus subsp. tengcongensis (strain DSM 15242 / JCM 11007 / NBRC 100824 / MB4) (Thermoanaerobacter tengcongensis).